The following is a 1050-amino-acid chain: NAD-specific glutamate dehydrogenase (1050 aa).

The tract at residues 1–39 (MDSPSAPVPAHKLVDRLKDQTPRHPSPQPTHVSYPKVNG) is disordered. Residues 12–22 (KLVDRLKDQTP) are compositionally biased toward basic and acidic residues. K594 is a catalytic residue.

This sequence belongs to the Glu/Leu/Phe/Val dehydrogenases family. In terms of assembly, homotetramer.

The enzyme catalyses L-glutamate + NAD(+) + H2O = 2-oxoglutarate + NH4(+) + NADH + H(+). The polypeptide is NAD-specific glutamate dehydrogenase (gdh-1) (Neurospora crassa (strain ATCC 24698 / 74-OR23-1A / CBS 708.71 / DSM 1257 / FGSC 987)).